The sequence spans 135 residues: uncharacterized protein (135 aa).

Residues 25–123 enclose the HTH hxlR-type domain; that stretch reads CPIQHVVDLL…LGSDWLEQES (99 aa).

This is an uncharacterized protein from Synechocystis sp. (strain ATCC 27184 / PCC 6803 / Kazusa).